Consider the following 433-residue polypeptide: O-methyltransferase hasC (433 aa).

S-adenosyl-L-methionine is bound by residues Glu265 and 293-295; that span reads GDF. His313 functions as the Proton acceptor in the catalytic mechanism. Residues 413–433 form a disordered region; sequence SPRANGNGNSAGGLEWESELM.

It belongs to the class I-like SAM-binding methyltransferase superfamily. Cation-independent O-methyltransferase family. COMT subfamily.

Its pathway is secondary metabolite biosynthesis. Its function is as follows. O-methyltransferase; part of the gene cluster that mediates the biosynthesis of hexadehydro-astechrome (HAS), a tryptophan-derived iron(III)-complex that acts as a virulence factor in infected mice. Within the pathway, hasC, with the cytochrome P450 monooxygenase hasH and the FAD-linked oxidoreductase hasG, convert the hasE-prenylated Trp-Ala-dipeptide into an O-methylated diketopiperazine that is then released from the hasD NRPS. The HAS biosynthesis begins with the synthesis of a tethered Trp-Ala dipeptide by the NRPS hasD. The 7-dimethylallyltryptophan synthase hasE then catalyzes the prenylation of the hasD-tethered tryptophan or the resulting tethered Trp-Ala dipeptide at the C-7 position of the indole moiety. HAS biosynthesis continues via tethered intermediates with the succesive actions of the cytochrome P450 monooxygenase hasH, the O-methyltransferase hasC, and the FAD-linked oxidoreductase hasG. The resulting O-methylated diketopiperazine is then released from hasD. Finally, three O-methylated diketopiperazine molecules assemble in a trimeric complex with Fe(III) to produce hexadehydro-astechrome. The chain is O-methyltransferase hasC from Aspergillus fumigatus (strain CBS 144.89 / FGSC A1163 / CEA10) (Neosartorya fumigata).